Consider the following 187-residue polypeptide: Probable chemoreceptor glutamine deamidase CheD (187 aa).

A disordered region spans residues 164–187 (APQDVRRPTPPPMPAVASGDVDLF).

This sequence belongs to the CheD family.

It catalyses the reaction L-glutaminyl-[protein] + H2O = L-glutamyl-[protein] + NH4(+). In terms of biological role, probably deamidates glutamine residues to glutamate on methyl-accepting chemotaxis receptors (MCPs), playing an important role in chemotaxis. This chain is Probable chemoreceptor glutamine deamidase CheD, found in Caulobacter vibrioides (strain ATCC 19089 / CIP 103742 / CB 15) (Caulobacter crescentus).